A 132-amino-acid polypeptide reads, in one-letter code: Small ribosomal subunit protein uS8 (132 aa).

It belongs to the universal ribosomal protein uS8 family. In terms of assembly, part of the 30S ribosomal subunit. Contacts proteins S5 and S12.

Its function is as follows. One of the primary rRNA binding proteins, it binds directly to 16S rRNA central domain where it helps coordinate assembly of the platform of the 30S subunit. This chain is Small ribosomal subunit protein uS8, found in Streptococcus gordonii (strain Challis / ATCC 35105 / BCRC 15272 / CH1 / DL1 / V288).